A 390-amino-acid polypeptide reads, in one-letter code: Chaperone protein DnaJ (390 aa).

The region spanning 6–70 (DYYEILGVPR…QKRAQYDQFG (65 aa)) is the J domain. The CR-type zinc finger occupies 146 to 228 (GSEKEIYVTR…CHGTGKVRRK (83 aa)). Positions 159, 162, 176, 179, 202, 205, 216, and 219 each coordinate Zn(2+). CXXCXGXG motif repeat units follow at residues 159–166 (CPTCKGKG), 176–183 (CDMCNGTG), 202–209 (CPKCHGTG), and 216–223 (CHECHGTG).

It belongs to the DnaJ family. In terms of assembly, homodimer. It depends on Zn(2+) as a cofactor.

The protein resides in the cytoplasm. Its function is as follows. Participates actively in the response to hyperosmotic and heat shock by preventing the aggregation of stress-denatured proteins and by disaggregating proteins, also in an autonomous, DnaK-independent fashion. Unfolded proteins bind initially to DnaJ; upon interaction with the DnaJ-bound protein, DnaK hydrolyzes its bound ATP, resulting in the formation of a stable complex. GrpE releases ADP from DnaK; ATP binding to DnaK triggers the release of the substrate protein, thus completing the reaction cycle. Several rounds of ATP-dependent interactions between DnaJ, DnaK and GrpE are required for fully efficient folding. Also involved, together with DnaK and GrpE, in the DNA replication of plasmids through activation of initiation proteins. The sequence is that of Chaperone protein DnaJ from Dictyoglomus thermophilum (strain ATCC 35947 / DSM 3960 / H-6-12).